Reading from the N-terminus, the 670-residue chain is Transketolase, plasmid (670 aa).

Residue histidine 32 participates in substrate binding. Thiamine diphosphate is bound by residues histidine 72 and 120-122 (GPL). Residue aspartate 161 coordinates Mg(2+). Thiamine diphosphate contacts are provided by glycine 162 and asparagine 191. Mg(2+) contacts are provided by asparagine 191 and isoleucine 193. Substrate contacts are provided by histidine 267, arginine 364, and serine 391. A thiamine diphosphate-binding site is contributed by histidine 267. Glutamate 417 serves as the catalytic Proton donor. Phenylalanine 443 contacts thiamine diphosphate. Histidine 467, aspartate 475, and arginine 526 together coordinate substrate.

Belongs to the transketolase family. In terms of assembly, homodimer. Mg(2+) serves as cofactor. Ca(2+) is required as a cofactor. The cofactor is Mn(2+). Requires Co(2+) as cofactor. It depends on thiamine diphosphate as a cofactor.

The enzyme catalyses D-sedoheptulose 7-phosphate + D-glyceraldehyde 3-phosphate = aldehydo-D-ribose 5-phosphate + D-xylulose 5-phosphate. The protein operates within carbohydrate biosynthesis; Calvin cycle. Its function is as follows. Catalyzes the transfer of a two-carbon ketol group from a ketose donor to an aldose acceptor, via a covalent intermediate with the cofactor thiamine pyrophosphate. In Cupriavidus necator (strain ATCC 17699 / DSM 428 / KCTC 22496 / NCIMB 10442 / H16 / Stanier 337) (Ralstonia eutropha), this protein is Transketolase, plasmid (cbbTP).